The sequence spans 292 residues: MSERYPIIAITGSSGAGTTSVTRTFENIFRREGVKSVVIEGDSFHRYDRAEMKVKMAEAERTGNMNFSHFGEENNLFGELENLFRSYAETGTGMHRHYLHSPEEAAPFGQEPGTFTQWEPLPADTDLLFYEGLHGGVVTDSVNVAQYPNLLIGVVPVINLEWIQKLWRDKKQRGYSTEAVTDTILRRMPDYVNYICPQFSRTHVNFQRVPCVDTSNPFISREIPAPDESMVVIRFANPKGIDFQYLLSMIHDSFMSRANTIVVPGGKMELAMQLIFTPFVLRMMERRKRAAQ.

12–20 lines the ATP pocket; sequence GSSGAGTTS.

Belongs to the phosphoribulokinase family. Homooctamer.

It catalyses the reaction D-ribulose 5-phosphate + ATP = D-ribulose 1,5-bisphosphate + ADP + H(+). The protein operates within carbohydrate biosynthesis; Calvin cycle. In Cupriavidus necator (strain ATCC 17699 / DSM 428 / KCTC 22496 / NCIMB 10442 / H16 / Stanier 337) (Ralstonia eutropha), this protein is Phosphoribulokinase, chromosomal (cfxP).